We begin with the raw amino-acid sequence, 209 residues long: uncharacterized protein (209 aa).

This is an uncharacterized protein from Escherichia coli (strain K12).